The primary structure comprises 245 residues: Putative MSV199 domain-containing protein 146R (245 aa).

A GIY-YIG domain is found at 2–97 (RKGYIYVIEN…NTLHGKLKNL (96 aa)).

In Acheta domesticus (House cricket), this protein is Putative MSV199 domain-containing protein 146R.